We begin with the raw amino-acid sequence, 161 residues long: Non-specific lipid transfer protein GPI-anchored 24 (161 aa).

An N-terminal signal peptide occupies residues 1-23 (MAQTTTLILLLATLLVAATTVSG). 4 disulfide bridges follow: cysteine 42–cysteine 79, cysteine 49–cysteine 63, cysteine 64–cysteine 104, and cysteine 77–cysteine 113. N-linked (GlcNAc...) asparagine glycosylation is present at asparagine 92. Aspartate 138 carries GPI-anchor amidated aspartate lipidation. Residues 139-161 (AASKLAGTGLVGIVVITIAAMFY) constitute a propeptide, removed in mature form.

It belongs to the plant LTP family.

It localises to the cell membrane. Its function is as follows. Probable lipid transfer protein. This is Non-specific lipid transfer protein GPI-anchored 24 from Arabidopsis thaliana (Mouse-ear cress).